The following is a 1538-amino-acid chain: Arf-GAP with Rho-GAP domain, ANK repeat and PH domain-containing protein 3 (1538 aa).

The SAM domain maps to 4–68 (PQDLDIAVWL…LRLLRAGSAE (65 aa)). Disordered regions lie at residues 72-97 (DSHL…PVPK), 125-149 (SRNS…SVPN), and 215-242 (ASDR…EDAG). A compositionally biased stretch (pro residues) spans 82-97 (TPSPAPDAQPPKPVPK). Residues 216–241 (SDRRDGRGVCQERAEHRQDLETREDA) are compositionally biased toward basic and acidic residues. 2 consecutive PH domains span residues 282-374 (VPLL…SCLK) and 389-478 (RPLR…EAVT). Positions 479–606 (ETLSDYEVAE…LFRKPHPRHP (128 aa)) constitute an Arf-GAP domain. 2 consecutive PH domains span residues 671–785 (ATYR…FSPL) and 795–901 (LLRM…AGGG). The Rho-GAP domain occupies 903–1084 (TGLQEQQMSR…ELIDGYISVF (182 aa)). The Ras-associating domain occupies 1113 to 1206 (GDLIMEVYIE…ASLLLRKVSM (94 aa)). The region spanning 1219 to 1321 (ESPRVGLLRC…WTTSILKAQH (103 aa)) is the PH 5 domain. T1344 is modified (phosphothreonine). Y1399 and Y1404 each carry phosphotyrosine. The segment covering 1425–1439 (WSAKSDPSLTSQRSF) has biased composition (polar residues). Positions 1425–1538 (WSAKSDPSLT…SNPPSSQPLT (114 aa)) are disordered. A phosphoserine mark is found at S1438 and S1474. Composition is skewed to low complexity over residues 1476–1486 (EEQLLQELNNL) and 1494–1505 (ASCPESSSQPTS). Over residues 1506 to 1529 (PQAPSPTSLPTPTPSLPTQPPCTS) the composition is skewed to pro residues.

Interacts (via SAM domain) with INPPL1/SHIP2. Post-translationally, tyrosine phosphorylated at a low basal level. PDGF treatment stimulates phosphorylation. Tyrosine phosphorylation is increased in cells that are in the process of becoming attached to a substrate and that start spreading and flattening.

It is found in the cytoplasm. It localises to the cell membrane. Its subcellular location is the cytoskeleton. The protein resides in the cell projection. The protein localises to the lamellipodium. It is found in the ruffle. In terms of biological role, phosphatidylinositol 3,4,5-trisphosphate-dependent GTPase-activating protein that modulates actin cytoskeleton remodeling by regulating ARF and RHO family members. Is activated by phosphatidylinositol 3,4,5-trisphosphate (PtdIns(3,4,5)P3) binding. Can be activated by phosphatidylinositol 3,4-bisphosphate (PtdIns(3,4,5)P2) binding, albeit with lower efficiency. Acts preferentially on ARF5 and on RHOA. This chain is Arf-GAP with Rho-GAP domain, ANK repeat and PH domain-containing protein 3 (Arap3), found in Mus musculus (Mouse).